We begin with the raw amino-acid sequence, 1556 residues long: Ubiquitin carboxyl-terminal hydrolase 47 (1556 aa).

Residues 117–231 are disordered; the sequence is MKSDGEKAKS…AKKTAKVTSK (115 aa). Low complexity predominate over residues 146–156; that stretch reads ASGSSSPSKAK. Phosphoserine occurs at positions 172 and 173. Residues 180-189 show a composition bias toward low complexity; it reads IKTTAAKISK. Residues 191-200 show a composition bias toward basic and acidic residues; sequence GSEKAPRASP. The segment covering 208–219 has biased composition (polar residues); the sequence is TEINSKNTSSES. Serine 238 is modified (phosphoserine). The region spanning 396–779 is the USP domain; the sequence is VGLVNQAMTC…NAYMLMYRQV (384 aa). The active-site Nucleophile is cysteine 405. Composition is skewed to polar residues over residues 628 to 642 and 661 to 673; these read NRSGNSGEQNSQLNG and LSSGVVTTASSSQ. The interval 628–697 is disordered; the sequence is NRSGNSGEQN…SSSTSKSAKQ (70 aa). Residues 688–697 show a composition bias toward low complexity; sequence SSSTSKSAKQ. Histidine 720 acts as the Proton acceptor in catalysis. Positions 1087–1148 are disordered; sequence EPMSQPSPSH…LSSPEDEAAS (62 aa). Positions 1109-1125 are enriched in basic and acidic residues; that stretch reads DGDRTLVETDNMAHRGG. The span at 1128–1141 shows a compositional bias: low complexity; the sequence is SQVSSTSHSPQLSS. Residues serine 1131, serine 1132, serine 1140, serine 1141, serine 1199, serine 1201, and serine 1205 each carry the phosphoserine modification.

It belongs to the peptidase C19 family. Interacts with ttk.

The protein localises to the nucleus. It catalyses the reaction Thiol-dependent hydrolysis of ester, thioester, amide, peptide and isopeptide bonds formed by the C-terminal Gly of ubiquitin (a 76-residue protein attached to proteins as an intracellular targeting signal).. Its function is as follows. Ubiquitin-specific protease that deubiquitinates target proteins to regulate different cellular and developmental pathways. Functions downstream of Dsor1/MEK to positively regulate the Ras/MAPK signaling pathway. Likely to modulate the pathway during various cellular and developmental processes including rl/MAPK activation by the receptors InR, Egfr and sevenless/sev. Functions in the post-translational stabilization of rl/MAPK levels in a mechanism that is independent of rl activity and opposes the activity of the E2 enzyme Unc6 and the putative E3 ligases poe, Ufd4 and Kcmf1, which mediate the ubiquitination and proteasomal degradation of rl. During eye development it may also act downstream of rl/MAPK to negatively regulate the Ras/MAPK signaling pathway by stabilizing the transcriptional repressor ttk and consequently inhibiting photoreceptor cell development. This suggests that at least during eye development, it may act in both the positive and negative regulation of the Ras/MAPK signaling pathway to mediate the development of different cell types. Positively regulates border follicle cell migration during oogenesis by mediating the deubiquitination and stabilization of slbo. In the wing disks it positively regulates wg signaling by stabilizing arm. Has an effect on position-effect variegation. This Drosophila melanogaster (Fruit fly) protein is Ubiquitin carboxyl-terminal hydrolase 47.